The chain runs to 31 residues: MFTVVSYLGILAAFALVTIGIFLVLRTIQLI.

A helical membrane pass occupies residues 4–24; it reads VVSYLGILAAFALVTIGIFLV.

This sequence belongs to the PetL family. The 4 large subunits of the cytochrome b6-f complex are cytochrome b6, subunit IV (17 kDa polypeptide, PetD), cytochrome f and the Rieske protein, while the 4 small subunits are PetG, PetL, PetM and PetN. The complex functions as a dimer.

Its subcellular location is the plastid. It is found in the chloroplast thylakoid membrane. Its function is as follows. Component of the cytochrome b6-f complex, which mediates electron transfer between photosystem II (PSII) and photosystem I (PSI), cyclic electron flow around PSI, and state transitions. PetL is important for photoautotrophic growth as well as for electron transfer efficiency and stability of the cytochrome b6-f complex. The sequence is that of Cytochrome b6-f complex subunit 6 from Mesostigma viride (Green alga).